A 382-amino-acid chain; its full sequence is S-adenosylmethionine synthase (382 aa).

Residue histidine 16 coordinates ATP. Aspartate 18 is a binding site for Mg(2+). Glutamate 44 contributes to the K(+) binding site. The L-methionine site is built by glutamate 57 and glutamine 100. The flexible loop stretch occupies residues 100–110 (QSADIAMGVDE). ATP-binding positions include 165 to 167 (DAK), aspartate 240, 246 to 247 (RK), alanine 263, and lysine 267. L-methionine is bound at residue aspartate 240. Lysine 271 lines the L-methionine pocket.

It belongs to the AdoMet synthase family. In terms of assembly, homotetramer; dimer of dimers. Requires Mg(2+) as cofactor. The cofactor is K(+).

The protein resides in the cytoplasm. The catalysed reaction is L-methionine + ATP + H2O = S-adenosyl-L-methionine + phosphate + diphosphate. The protein operates within amino-acid biosynthesis; S-adenosyl-L-methionine biosynthesis; S-adenosyl-L-methionine from L-methionine: step 1/1. Catalyzes the formation of S-adenosylmethionine (AdoMet) from methionine and ATP. The overall synthetic reaction is composed of two sequential steps, AdoMet formation and the subsequent tripolyphosphate hydrolysis which occurs prior to release of AdoMet from the enzyme. This is S-adenosylmethionine synthase from Saccharophagus degradans (strain 2-40 / ATCC 43961 / DSM 17024).